Here is a 186-residue protein sequence, read N- to C-terminus: MAQDKYIVALQIADKDLAKKLTIEEATLLGSLAEGGHTISNDLAEIIQGGKKDYSRNSVEEEIKLTLDVVPGDKGQLALKESVKQFKQLRVWIWETKKRDGKHHGVFAYVVIEEHEWSFDDEDNKIEITAKVKFNSADGTINDLPKEWLNPSALAPVVEFEDMNAYEDSYENRTKKTTAGSSDLSM.

This chain is Putative tail protein, found in Staphylococcus phage phiMR11.